A 419-amino-acid chain; its full sequence is MAATATMAMPLANRLRCKPNTNSSSPSRTLFGRRVTMISSSRWGSAVSGSAIMSAAADVAAAVRREEDEEMRSYLSPEKLEVLTQMEPWVEEHVLPLLKPVEAAWQPSDLLPDPAVLGGEGFHAACAELRERAAGVPDLLLVCLVANMVTEEALPTYQSSLNRVRAVGDLTGADATAWARWIRGWSAEENRHGDVLNRYMYLSGRFDMAEVERAVHRLIRSGMAVDPPCSPYHAFVYTAFQERATAVAHGNTARLVGARGHGDAALARVCGTVAADEKRHEAAYTRIVSRLLEADPDAGVRAVARMLRRGVAMPTSPISDGRRDDLYACVVSLAEQAGTYTVSDYCSIVEHLVREWRVEELAAGLSGEGRRARDYVCELPQKIRRMKEKAHERAVKAQKKPISIPINWIFDRHVSVMLP.

The transit peptide at 1 to 54 (MAATATMAMPLANRLRCKPNTNSSSPSRTLFGRRVTMISSSRWGSAVSGSAIMS) directs the protein to the chloroplast. Fe cation is bound by residues glutamate 151, glutamate 189, histidine 192, glutamate 242, glutamate 277, and histidine 280.

This sequence belongs to the fatty acid desaturase type 2 family. As to quaternary structure, homodimer. It depends on Fe(2+) as a cofactor.

It is found in the plastid. Its subcellular location is the chloroplast. The protein operates within lipid metabolism; fatty acid metabolism. In terms of biological role, introduces a cis double bond in the acyl chain of an acyl-[acyl-carrier protein]. This Oryza sativa subsp. japonica (Rice) protein is Acyl-[acyl-carrier-protein] desaturase 6, chloroplastic.